The chain runs to 119 residues: Chorion class CA protein ERA.5 (119 aa).

The first 21 residues, Met1 to Ser21, serve as a signal peptide directing secretion. Positions Gln22–Gly55 are left arm. Residues Gly56–Ile103 are central domain. The right arm stretch occupies residues Ser104–Tyr119.

The protein belongs to the chorion protein family.

Its function is as follows. This protein is one of many from the eggshell of the silk moth. This chain is Chorion class CA protein ERA.5 (ERA.5), found in Bombyx mori (Silk moth).